The following is a 251-amino-acid chain: Triosephosphate isomerase (251 aa).

9–11 (NWK) is a binding site for substrate. Histidine 95 acts as the Electrophile in catalysis. Glutamate 167 serves as the catalytic Proton acceptor. Residues glycine 173, serine 212, and 233-234 (GG) contribute to the substrate site.

This sequence belongs to the triosephosphate isomerase family. In terms of assembly, homodimer.

The protein resides in the cytoplasm. The catalysed reaction is D-glyceraldehyde 3-phosphate = dihydroxyacetone phosphate. The protein operates within carbohydrate biosynthesis; gluconeogenesis. Its pathway is carbohydrate degradation; glycolysis; D-glyceraldehyde 3-phosphate from glycerone phosphate: step 1/1. In terms of biological role, involved in the gluconeogenesis. Catalyzes stereospecifically the conversion of dihydroxyacetone phosphate (DHAP) to D-glyceraldehyde-3-phosphate (G3P). In Pseudomonas putida (strain W619), this protein is Triosephosphate isomerase.